Consider the following 157-residue polypeptide: Small ribosomal subunit protein uS7c (157 aa).

It belongs to the universal ribosomal protein uS7 family. In terms of assembly, part of the 30S ribosomal subunit.

It is found in the plastid. Its subcellular location is the organellar chromatophore. Functionally, one of the primary rRNA binding proteins, it binds directly to 16S rRNA where it nucleates assembly of the head domain of the 30S subunit. The protein is Small ribosomal subunit protein uS7c (rps7) of Paulinella chromatophora.